The following is a 287-amino-acid chain: UTP--glucose-1-phosphate uridylyltransferase 1 (287 aa).

This sequence belongs to the UDPGP type 2 family.

It carries out the reaction alpha-D-glucose 1-phosphate + UTP + H(+) = UDP-alpha-D-glucose + diphosphate. The protein operates within glycolipid metabolism; diglucosyl-diacylglycerol biosynthesis. Functionally, catalyzes the formation of UDP-glucose from glucose-1-phosphate and UTP. This is an intermediate step in the biosynthesis of diglucosyl-diacylglycerol (Glc2-DAG), i.e. a glycolipid found in the membrane, which is also used as a membrane anchor for lipoteichoic acid (LTA). In Staphylococcus saprophyticus subsp. saprophyticus (strain ATCC 15305 / DSM 20229 / NCIMB 8711 / NCTC 7292 / S-41), this protein is UTP--glucose-1-phosphate uridylyltransferase 1 (gtaB1).